The chain runs to 238 residues: Flagellar L-ring protein (238 aa).

A signal peptide spans 1-23 (MVKLFSYKIKYYLTAFFIIIIQS). C24 carries the N-palmitoyl cysteine lipid modification. A lipid anchor (S-diacylglycerol cysteine) is attached at C24.

The protein belongs to the FlgH family. The basal body constitutes a major portion of the flagellar organelle and consists of four rings (L,P,S, and M) mounted on a central rod.

It localises to the cell outer membrane. The protein localises to the bacterial flagellum basal body. Its function is as follows. Assembles around the rod to form the L-ring and probably protects the motor/basal body from shearing forces during rotation. This chain is Flagellar L-ring protein, found in Buchnera aphidicola subsp. Schizaphis graminum (strain Sg).